Here is a 361-residue protein sequence, read N- to C-terminus: Ferredoxin--NADP reductase 1 (361 aa).

Aspartate 44, glutamine 52, tyrosine 57, alanine 97, phenylalanine 142, aspartate 308, and serine 349 together coordinate FAD.

It belongs to the ferredoxin--NADP reductase type 2 family. As to quaternary structure, homodimer. FAD serves as cofactor.

It catalyses the reaction 2 reduced [2Fe-2S]-[ferredoxin] + NADP(+) + H(+) = 2 oxidized [2Fe-2S]-[ferredoxin] + NADPH. This Cupriavidus necator (strain ATCC 17699 / DSM 428 / KCTC 22496 / NCIMB 10442 / H16 / Stanier 337) (Ralstonia eutropha) protein is Ferredoxin--NADP reductase 1.